The chain runs to 87 residues: Small ribosomal subunit protein bS20 (87 aa).

The protein belongs to the bacterial ribosomal protein bS20 family.

Binds directly to 16S ribosomal RNA. The chain is Small ribosomal subunit protein bS20 from Alkaliphilus oremlandii (strain OhILAs) (Clostridium oremlandii (strain OhILAs)).